Here is a 423-residue protein sequence, read N- to C-terminus: Protein phosphatase 2C 77 (423 aa).

The disordered stretch occupies residues 74-95 (GDEINGSDEFDPRSMNQSEKKV). The 300-residue stretch at 112-411 (LYGVTSICGR…DNISVVVVDL (300 aa)) folds into the PPM-type phosphatase domain. Aspartate 165, aspartate 251, and serine 252 together coordinate Mg(2+). A disulfide bridge links cysteine 257 with cysteine 331. The Mg(2+) site is built by aspartate 337 and aspartate 402.

The protein belongs to the PP2C family. In terms of assembly, interacts with SPK1, CIPK15/PKS3, GPX3, SCAR1, SCAR2, SCAR3 and SCARL. Also interacts with CIPK24/SOS2. Binds to the fibrillin precursor protein. Interacts with ABA-bounded PYR1, PYL1, PYL2, PYL3, PYL4, PYL5, PYL6, PYL8 and PYL9, and with free PYL2, PYL3 and PYL4. Interacts with and represses GHR1, and, to a lesser extent, SRK2E/OST1. The cofactor is Mg(2+). It depends on Mn(2+) as a cofactor.

The catalysed reaction is O-phospho-L-seryl-[protein] + H2O = L-seryl-[protein] + phosphate. It catalyses the reaction O-phospho-L-threonyl-[protein] + H2O = L-threonyl-[protein] + phosphate. Phosphatase activity repressed by oxidized ATGPX3, free fatty acids (e.g. arachidonic acid (20:4) and Linolenic acid (18:3)) and by H(2)O(2). Repressed by PYR/PYL/RCAR ABA receptors in an ABA-dependent manner. Its function is as follows. Repressor of the abscisic acid (ABA) signaling pathway that regulates numerous ABA responses, such as stomatal closure, osmotic water permeability of the plasma membrane (Pos), high light stress, response to glucose, seed germination and inhibition of vegetative growth. During the stomatal closure regulation, modulates the inward calcium-channel permeability as well as H(2)O(2) and oxidative burst in response to ABA and dehydration. Represses GHR1 and, to some extent, SRK2E/OST1, kinases involved in the regulation of SLAC1-dependent stomatal closure. Controls negatively fibrillin that is involved in mediating ABA-induced photoprotection. May be implicated in ABA content regulation. Involved in acquired thermotolerance of root growth and seedling survival. Required for the Erwinia amylovora harpin-induced (HrpN) drought tolerance. Involved in the hydrotropic response. This is Protein phosphatase 2C 77 from Arabidopsis thaliana (Mouse-ear cress).